A 130-amino-acid chain; its full sequence is Protein lgg-2 (130 aa).

Gly130 is lipidated: Phosphatidylethanolamine amidated glycine.

Belongs to the ATG8 family. As to quaternary structure, may interact with vps-39. Interacts with lgg-3; the interaction is direct. Interacts with atg-16.1 (via WD domain) and atg-16.2 (via WD 5-6 repeats); the interactions are direct. Interacts with sepa-1 (via the LIR motifs); the interaction is direct. Interacts with sqst-1 (via the LIR motifs); the interaction is direct. Interacts with epg-2 (via the LIR motifs); the interaction is weak. Interacts with atg-7; the interaction is direct. Interacts with atg-3. The interaction with atg-7 and atg-3 may be required for the lipidation of lgg-2. In terms of processing, this protein is subject to lipidation. Lipidation is regulated by lgg-1.

Its subcellular location is the cytoplasmic vesicle. It localises to the autophagosome. The protein resides in the cytoplasm. It is found in the cell membrane. Ubiquitin-like modifier involved in the formation of autophagosomal vacuoles (autophagosomes). When lipidated mediates tethering between adjacent membranes and stimulates membrane fusion. Less effective at promoting membrane fusion than lgg-1. Acts upstream of the autophagy protein epg-5 in the aggrephagy pathway, which is the macroautophagic degradation of ubiquitinated protein aggregates, and preferentially interacts with autophagy proteins and substrates containing LIR motifs to mediate autophagosome formation and protein aggregate degradation. In particular binds to components of an atg-5-lgg-3-atg-16 complex to regulate autophagosome formation and cargo sequestration. Required for the degradation of specific sqst-1-containing aggregates during embryogenesis and the early stages of larval development. Involved in allophagy, which is an autophagic process in which paternal mitochondria and organelles are degraded during fertilization, and moreover is required for the degradation of lgg-1-positive allophagic autophagosomes in embryos. Involved in xenophagy, the autophagy-mediated degradation of pathogens and pathogen products, such as toxins. Also plays a role in membrane-pore repair. Through HOPS complex subunit vps-39, tethers lysosomes with autophagosomes to form autolysosomes. Plays a role in the distribution and clearance of germ cell specific P-granules from somatic cells to ensure exclusive localization of the P-granules in germ cells. Essential for dauer development and life-span extension. The sequence is that of Protein lgg-2 from Caenorhabditis elegans.